The chain runs to 1034 residues: N-acetyl-beta-glucosaminyl-glycoprotein 4-beta-N-acetylgalactosaminyltransferase 1 (1034 aa).

Residues 1–12 (MPWFPVKKVRKQ) lie on the Cytoplasmic side of the membrane. Residues 13–31 (MKLLLLLLLLTCAAWLTYV) traverse the membrane as a helical; Signal-anchor for type II membrane protein segment. Residues 32–1034 (HRSLVRPGRA…SRKGARAQRS (1003 aa)) lie on the Lumenal side of the membrane. A disordered region spans residues 51–104 (DGEKLTGVTDSRGVRVPSSTQRSEDSSESHEEEQAPEGRGPNMLFPGGPRKPPP). Residues 72–83 (RSEDSSESHEEE) are compositionally biased toward basic and acidic residues. Residue Asn106 is glycosylated (N-linked (GlcNAc...) asparagine). Residues 109–279 (HQTPPWREEF…LKFEIIDSAH (171 aa)) form the PA14 domain. 2 disordered regions span residues 450-486 (PTDA…DEQT) and 556-600 (RVQL…QLHG). The span at 461–473 (TPTPAASTGTTAS) shows a compositional bias: low complexity. An N-linked (GlcNAc...) asparagine glycan is attached at Asn611. Disordered stretches follow at residues 626–669 (SQVS…PLGR) and 782–801 (GDED…HPDS). The segment covering 636-661 (EGEEGEEDGAPGDEATSEDSEEEEEP) has biased composition (acidic residues).

This sequence belongs to the chondroitin N-acetylgalactosaminyltransferase family.

Its subcellular location is the golgi apparatus. The protein localises to the golgi stack membrane. The enzyme catalyses an N-acetyl-beta-D-glucosaminyl derivative + UDP-N-acetyl-alpha-D-galactosamine = an N-acetyl-beta-D-galactosaminyl-(1-&gt;4)-N-acetyl-beta-D-glucosaminyl derivative + UDP + H(+). Transfers N-acetylgalactosamine (GalNAc) from UDP-GalNAc to N-acetylglucosamine-beta-benzyl with a beta-1,4-linkage to form N,N'-diacetyllactosediamine, GalNAc-beta-1,4-GlcNAc structures in N-linked glycans and probably O-linked glycans. The polypeptide is N-acetyl-beta-glucosaminyl-glycoprotein 4-beta-N-acetylgalactosaminyltransferase 1 (B4galnt4) (Mus musculus (Mouse)).